A 1043-amino-acid chain; its full sequence is Non-canonical nonribosomal peptide synthetase cpsA (1043 aa).

An adenylation (A) domain region spans residues Arg-41–Tyr-386. In terms of domain architecture, Carrier spans Gln-549–Gly-626. Ser-586 is subject to O-(pantetheine 4'-phosphoryl)serine. Residues Met-671–Ala-914 form a short-chain dehydrogenase/reductase (R) domain region. In terms of domain architecture, Thioester reductase (TE) spans Thr-672–Ile-915.

It belongs to the NRP synthetase family. Pantetheine 4'-phosphate serves as cofactor.

It catalyses the reaction L-valine + ATP + NADPH + H(+) = L-valinal + AMP + diphosphate + NADP(+). The enzyme catalyses L-tryptophan + ATP + NADPH + H(+) = L-tryptophanal + AMP + diphosphate + NADP(+). The protein operates within alkaloid biosynthesis. Its function is as follows. Non-canonical nonribosomal peptide synthetase; part of the gene cluster that mediates the biosynthesis of campesine G, a dimeric indole piperazine alkaloid that shows good insecticidal activity Galleria mellonella. CpsA catalyzes the first steps of the pathway by producing L-tryptophanal and L-valinal from their respective amino-acids. These products condensate spontaneously to form trypyl-valyl pyrazine also known as didehydrocampesine A. The NmrA-like family domain-containing oxidoreductase cpsB is the next enzyme in cps pathway and reduces the unstable didehydrocampesine A to campesine A. The methyltransferase cpsF and the acetyltransferase cpsE both recognize N13 of piperazine ring to carry out methylation and acetylation of campesine A to produce campesine C and B, respectively. The cytochrome P450 monooxygenase cpsD then acts as a dimerase that catalyzes oxidative heterocoupling between campesine B and C to produce heterodimers with unexpected 6/5/6/6/6/6/5/6 eight-ring scaffold called campesine D. Finally,the cytochrome P450 monooxygenase cpsC is a regioselective dehydrogenase that catalyzes dehydrogenation reaction towards C2-N1 to produce campesine G. In Aspergillus campestris (strain IBT 28561), this protein is Non-canonical nonribosomal peptide synthetase cpsA.